Consider the following 354-residue polypeptide: DNA polymerase IV (354 aa).

The UmuC domain maps to 6–187 (IIHVDCDCFY…LPVARLHGVG (182 aa)). Residues Asp10 and Asp105 each contribute to the Mg(2+) site. Glu106 is an active-site residue.

Belongs to the DNA polymerase type-Y family. Monomer. Mg(2+) serves as cofactor.

The protein resides in the cytoplasm. The catalysed reaction is DNA(n) + a 2'-deoxyribonucleoside 5'-triphosphate = DNA(n+1) + diphosphate. Poorly processive, error-prone DNA polymerase involved in untargeted mutagenesis. Copies undamaged DNA at stalled replication forks, which arise in vivo from mismatched or misaligned primer ends. These misaligned primers can be extended by PolIV. Exhibits no 3'-5' exonuclease (proofreading) activity. May be involved in translesional synthesis, in conjunction with the beta clamp from PolIII. This Pseudomonas putida (strain ATCC 700007 / DSM 6899 / JCM 31910 / BCRC 17059 / LMG 24140 / F1) protein is DNA polymerase IV.